The sequence spans 1007 residues: Serine/threonine-protein kinase PRP4 homolog (1007 aa).

The segment covering 1–10 has biased composition (polar residues); that stretch reads MAAAETQSLR. The interval 1–99 is disordered; the sequence is MAAAETQSLR…EGMSPAKRTK (99 aa). N-acetylalanine is present on Ala2. Phosphoserine is present on residues Ser8, Ser20, Ser23, and Ser32. Composition is skewed to basic residues over residues 39 to 59 and 67 to 81; these read KHSR…KHKH and KKHK…HKRK. Residues 82 to 91 are compositionally biased toward basic and acidic residues; sequence EIIDASDKEG. A phosphoserine mark is found at Ser87 and Ser93. Residue Lys99 is modified to N6-acetyllysine; alternate. A Glycyl lysine isopeptide (Lys-Gly) (interchain with G-Cter in SUMO2); alternate cross-link involves residue Lys99. A Glycyl lysine isopeptide (Lys-Gly) (interchain with G-Cter in SUMO2) cross-link involves residue Lys111. A Glycyl lysine isopeptide (Lys-Gly) (interchain with G-Cter in SUMO2); alternate cross-link involves residue Lys117. Residue Lys117 forms a Glycyl lysine isopeptide (Lys-Gly) (interchain with G-Cter in SUMO1); alternate linkage. Ser131 is subject to Phosphoserine. Tyr140 is modified (phosphotyrosine). Disordered stretches follow at residues 140–533 and 559–583; these read YESG…EEED and SNMS…SPDD. Phosphoserine occurs at positions 142, 144, and 166. Residues 157 to 168 show a composition bias toward low complexity; that stretch reads GNRSSTRSSSTK. Glycyl lysine isopeptide (Lys-Gly) (interchain with G-Cter in SUMO2) cross-links involve residues Lys170 and Lys177. Composition is skewed to basic residues over residues 179 to 202 and 214 to 230; these read TTKK…KKSK and RSKS…SKRS. A phosphoserine mark is found at Ser239, Ser241, Ser257, Ser277, Ser283, Ser292, and Ser294. Positions 247 to 270 are enriched in basic and acidic residues; sequence RSQEKIGKARSPTDDKVKIEDKSK. A compositionally biased stretch (basic residues) spans 302 to 315; sequence SKDRRSRSKERKSK. Residues 316-325 show a composition bias toward basic and acidic residues; sequence RSETDKEKKP. Phosphoserine occurs at positions 328, 354, 356, 366, and 368. Basic residues predominate over residues 342-367; sequence PSRRPGRSPKRRSLSPKPRDKSRRSR. Thr385 bears the Phosphothreonine mark. Ser387 bears the Phosphoserine mark. Composition is skewed to basic and acidic residues over residues 395 to 408 and 415 to 429; these read RSLE…ERRR and RPRD…RSKD. Residues Ser427, Ser431, and Ser437 each carry the phosphoserine modification. Residues 438 to 497 show a composition bias toward basic residues; it reads PTRRRSRSPIRRRSRSPLRRSRSPRRRSRSPRRRDRGRRSRSRLRRRSRSRGGRRRRSRS. Phosphoserine is present on residues Ser518, Ser519, Ser520, Ser565, Ser569, Ser578, and Ser580. The span at 518 to 533 shows a compositional bias: acidic residues; that stretch reads SSSDDNLEDFDVEEED. Over residues 562 to 581 the composition is skewed to low complexity; the sequence is SVPSEPSSPQSSTRTRSPSP. Residues Lys593 and Lys659 each participate in a glycyl lysine isopeptide (Lys-Gly) (interchain with G-Cter in SUMO2) cross-link. The 320-residue stretch at 687 to 1006 folds into the Protein kinase domain; it reads YNVYGYTGQG…ALQHAFIQEK (320 aa). ATP is bound by residues 693–701 and Lys717; that span reads TGQGVFSNV. Lys717 bears the N6-acetyllysine mark. The active-site Proton acceptor is the Asp815. Phosphotyrosine is present on Tyr849. Residue Ser852 is modified to Phosphoserine.

Belongs to the protein kinase superfamily. CMGC Ser/Thr protein kinase family. In terms of assembly, interacts with CLK1 C-terminus. Associates with the U5 snRNP and NCOR1 deacetylase complexes. Identified in the spliceosome C complex. Post-translationally, phosphorylated by CLK1. Autophosphorylated; phosphorylation inhibits interaction with its targets, such as PRPF6 or SMARCA4. Ubiquitous.

Its subcellular location is the nucleus. It is found in the chromosome. It localises to the centromere. The protein localises to the kinetochore. It catalyses the reaction L-seryl-[protein] + ATP = O-phospho-L-seryl-[protein] + ADP + H(+). The catalysed reaction is L-threonyl-[protein] + ATP = O-phospho-L-threonyl-[protein] + ADP + H(+). Its function is as follows. Serine/threonine kinase involved in spliceosomal assembly as well as mitosis and signaling regulation. Connects chromatin mediated regulation of transcription and pre-mRNA splicing. During spliceosomal assembly, interacts with and phosphorylates PRPF6 and PRPF31, components of the U4/U6-U5 tri-small nuclear ribonucleoprotein (snRNP), to facilitate the formation of the spliceosome B complex. Plays a role in regulating transcription and the spindle assembly checkpoint (SAC). Associates with U5 snRNP and NCOR1 deacetylase complexes which may allow a coordination of pre-mRNA splicing with chromatin remodeling events involved in transcriptional regulation. Associates and probably phosphorylates SMARCA4 and NCOR1. Phosphorylates SRSF1. Associates with kinetochores during mitosis and is necessary for recruitment and maintenance of the checkpoint proteins such as MAD1L1 and MAD12L1 at the kinetochores. Phosphorylates and regulates the activity of the transcription factors such as ELK1 and KLF13. Phosphorylates nuclear YAP1 and WWTR1/TAZ which induces nuclear exclusion and regulates Hippo signaling pathway, involved in tissue growth control. This is Serine/threonine-protein kinase PRP4 homolog from Homo sapiens (Human).